A 196-amino-acid chain; its full sequence is SPRY domain-containing protein 7 (196 aa).

The residue at position 2 (Ala-2) is an N-acetylalanine. The B30.2/SPRY domain occupies 2-184 (AASAWCCLRC…FSEFYHTPPP (183 aa)).

The sequence is that of SPRY domain-containing protein 7 (Spryd7) from Mus musculus (Mouse).